The sequence spans 140 residues: Midkine (140 aa).

The N-terminal stretch at 1 to 22 (MQHRGFFLLALLALLVVTSAVA) is a signal peptide. 5 disulfide bridges follow: Cys-34–Cys-58, Cys-42–Cys-67, Cys-49–Cys-71, Cys-81–Cys-113, and Cys-91–Cys-123.

Belongs to the pleiotrophin family. As to quaternary structure, homodimer. Interacts with ALK. Interacts with LRP1; promotes neuronal survival. Interacts with LRP2. Interacts with NCAM1. Interacts (via C-terminal) with PTPRZ1 (via chondroitin sulfate chains); this interaction is inhibited by PTN; this interaction promotes neuronal migration. Interacts with NCL; this interaction promotes NCL clustering and lateral movements of this complex into lipid rafts leading to MDK internalization. Interacts with LRP6 and LRP8: this interaction is calcium dependent. Interacts with ITGA4. Interacts with ITGA6. Interacts with ITGB1. Interacts with ITGA4:ITGB1 complex; this interaction mediates MDK-induced osteoblast cells migration through PXN phosphorylation. Interacts with ITGA6:ITGB1 complex; this interaction mediates MDK-induced neurite outgrowth. Interacts with NOTCH2; this interactio mediates a nuclear accumulation of NOTCH2 and therefore activation of NOTCH2 signaling leading to interaction between HES1 and STAT3. Interacts with GPC2 (via heparan sulfate chain); this interaction is inhibited by heparin followed by chondroitin sulfate E; this interaction induces GPC2 clustering through heparan sulfate chain; this interaction induces neuronal cell adhesion and neurite outgrowth. Interacts with SDC3; this interaction induces SDC3 clustering; this interaction induces neuronal cell adhesion and neurite outgrowth. Interacts with SDC1. Interacts with CSPG5; this interaction promotes elongation of oligodendroglial precursor-like cells. In terms of tissue distribution, expressed in the follicular epithelium and granulosa cells of the ovary.

The protein localises to the secreted. In terms of biological role, secreted protein that functions as a cytokine and growth factor and mediates its signal through cell-surface proteoglycan and non-proteoglycan receptors. Binds cell-surface proteoglycan receptors via their chondroitin sulfate (CS) groups. Thereby regulates many processes like inflammatory response, cell proliferation, cell adhesion, cell growth, cell survival, tissue regeneration, cell differentiation and cell migration. Participates in inflammatory processes by exerting two different activities. Firstly, mediates neutrophils and macrophages recruitment to the sites of inflammation both by direct action by cooperating namely with ITGB2 via LRP1 and by inducing chemokine expression. This inflammation can be accompanied by epithelial cell survival and smooth muscle cell migration after renal and vessel damage, respectively. Secondly, suppresses the development of tolerogenic dendric cells thereby inhibiting the differentiation of regulatory T cells and also promote T cell expansion through NFAT signaling and Th1 cell differentiation. Promotes tissue regeneration after injury or trauma. After heart damage negatively regulates the recruitment of inflammatory cells and mediates cell survival through activation of anti-apoptotic signaling pathways via MAPKs and AKT pathways through the activation of angiogenesis. Also facilitates liver regeneration as well as bone repair by recruiting macrophage at trauma site and by promoting cartilage development by facilitating chondrocyte differentiation. Plays a role in brain by promoting neural precursor cells survival and growth through interaction with heparan sulfate proteoglycans. Binds PTPRZ1 and promotes neuronal migration and embryonic neurons survival. Binds SDC3 or GPC2 and mediates neurite outgrowth and cell adhesion. Binds chondroitin sulfate E and heparin leading to inhibition of neuronal cell adhesion induced by binding with GPC2. Binds CSPG5 and promotes elongation of oligodendroglial precursor-like cells. Also binds ITGA6:ITGB1 complex; this interaction mediates MDK-induced neurite outgrowth. Binds LRP1; promotes neuronal survival. Binds ITGA4:ITGB1 complex; this interaction mediates MDK-induced osteoblast cells migration through PXN phosphorylation. Binds anaplastic lymphoma kinase (ALK) which induces ALK activation and subsequent phosphorylation of the insulin receptor substrate (IRS1), followed by the activation of mitogen-activated protein kinase (MAPK) and PI3-kinase, and the induction of cell proliferation. Promotes epithelial to mesenchymal transition through interaction with NOTCH2. During arteriogenesis, plays a role in vascular endothelial cell proliferation by inducing VEGFA expression and release which in turn induces nitric oxide synthase expression. Moreover activates vasodilation through nitric oxide synthase activation. Negatively regulates bone formation in response to mechanical load by inhibiting Wnt/beta-catenin signaling in osteoblasts. In addition plays a role in hippocampal development, working memory, auditory response, early fetal adrenal gland development and the female reproductive system. The sequence is that of Midkine from Mus musculus (Mouse).